Reading from the N-terminus, the 334-residue chain is Putative ankyrin repeat protein RBE_0347 (334 aa).

ANK repeat units follow at residues glutamate 80 to serine 90, serine 91 to isoleucine 120, serine 124 to phenylalanine 161, and valine 162 to valine 191.

The chain is Putative ankyrin repeat protein RBE_0347 from Rickettsia bellii (strain RML369-C).